The following is a 408-amino-acid chain: Inhibin beta B chain (408 aa).

Positions 1–28 are cleaved as a signal peptide; sequence MDGLPGRALGAACLLMLAVGSLGPGVWG. Residues 29–60 form a disordered region; that stretch reads SPTPPPLPAAPQPPPPPPGAPGGSQDTCTSCG. Residues 29–293 constitute a propeptide that is removed on maturation; it reads SPTPPPLPAA…GDSRHRIRKR (265 aa). Residues 30-48 are compositionally biased toward pro residues; the sequence is PTPPPLPAAPQPPPPPPGA. N-linked (GlcNAc...) asparagine glycosylation is present at N94. Cystine bridges form between C297–C305, C304–C373, C333–C405, and C337–C407.

This sequence belongs to the TGF-beta family. As to quaternary structure, dimeric, linked by one or more disulfide bonds. Inhibin B is a dimer of alpha and beta-B. Activin B is a homodimer of beta-B. Activin AB is a dimer of beta-A and beta-B. Interacts with FST and FSTL3.

The protein localises to the secreted. In terms of biological role, inhibins and activins inhibit and activate, respectively, the secretion of follitropin by the pituitary gland. Inhibins/activins are involved in regulating a number of diverse functions such as hypothalamic and pituitary hormone secretion, gonadal hormone secretion, germ cell development and maturation, erythroid differentiation, insulin secretion, nerve cell survival, embryonic axial development or bone growth, depending on their subunit composition. Inhibins appear to oppose the functions of activins. Its function is as follows. Activin B is a dimer of alpha and beta-B that plays a role in several essential biological processes including embryonic development, stem cell maintenance and differentiation, haematopoiesis, cell proliferation and wound healing. Signals through type I receptor ACVR1C, abundantly expressed in pancreatic beta cells, and type II receptors like ACVR2A. Upon ligand binding, these receptors phosphorylate intracellular signaling mediators SMAD2 and SMAD3, which form a complex with SMAD4, translocate to the nucleus, and regulate gene expression. Plays a crucial role in the induction of hepcidin by inflammation through activation of ACVR1C and subsequent phosphorylation of SMAD1/5/8. Regulates adipocyte lipid metabolism by decreasing non-esterified fatty acids and glycerol release and increases intracellular triglyceride content. Stimulates wound healing by promoting cell migration and hair follicle regeneration through the JNK and ERK signaling pathways downstream of RHOA. Functionally, inhibin B is a dimer of alpha and beta-B that plays a crucial role in the regulation of the reproductive system by inhibiting the secretion of follicle-stimulating hormone (FSH) from the anterior pituitary gland. Thereby, maintains reproductive homeostasis in both males and females. Acts as a more potent suppressor of FSH release than inhibin A. Functions as competitive receptor antagonist binding activin type II receptors with high affinity in the presence of the TGF-beta type III coreceptor/TGFBR3L. The chain is Inhibin beta B chain (INHBB) from Bos taurus (Bovine).